A 497-amino-acid chain; its full sequence is Glycerol kinase (497 aa).

Threonine 11 is an ADP binding site. Positions 11, 12, and 13 each coordinate ATP. Threonine 11 contributes to the sn-glycerol 3-phosphate binding site. Residue arginine 15 coordinates ADP. Positions 81, 82, 133, and 242 each coordinate sn-glycerol 3-phosphate. Glycerol contacts are provided by arginine 81, glutamate 82, tyrosine 133, aspartate 242, and glutamine 243. ADP-binding residues include threonine 264 and glycine 306. ATP-binding residues include threonine 264, glycine 306, glutamine 310, and glycine 407. Positions 407 and 411 each coordinate ADP.

This sequence belongs to the FGGY kinase family.

The catalysed reaction is glycerol + ATP = sn-glycerol 3-phosphate + ADP + H(+). It participates in polyol metabolism; glycerol degradation via glycerol kinase pathway; sn-glycerol 3-phosphate from glycerol: step 1/1. Inhibited by fructose 1,6-bisphosphate (FBP). Functionally, key enzyme in the regulation of glycerol uptake and metabolism. Catalyzes the phosphorylation of glycerol to yield sn-glycerol 3-phosphate. The sequence is that of Glycerol kinase from Alcanivorax borkumensis (strain ATCC 700651 / DSM 11573 / NCIMB 13689 / SK2).